Here is a 609-residue protein sequence, read N- to C-terminus: Probable translation initiation factor IF-2 (609 aa).

In terms of domain architecture, tr-type G spans 12–230 (LRQPIVAVLG…VLAGLAQRYM (219 aa)). The segment at 21–28 (GHVDHGKT) is G1. Residue 21-28 (GHVDHGKT) coordinates GTP. Positions 46-50 (QITQH) are G2. The tract at residues 86–89 (DTPG) is G3. GTP is bound by residues 86-90 (DTPGH) and 140-143 (NKID). The segment at 140–143 (NKID) is G4. Positions 208–210 (SAK) are G5.

It belongs to the TRAFAC class translation factor GTPase superfamily. Classic translation factor GTPase family. IF-2 subfamily.

Functionally, function in general translation initiation by promoting the binding of the formylmethionine-tRNA to ribosomes. Seems to function along with eIF-2. The sequence is that of Probable translation initiation factor IF-2 from Ignicoccus hospitalis (strain KIN4/I / DSM 18386 / JCM 14125).